The chain runs to 563 residues: Arginine--tRNA ligase (563 aa).

The short motif at 121-131 is the 'HIGH' region element; the sequence is PNIAKPFSIGH.

This sequence belongs to the class-I aminoacyl-tRNA synthetase family. Monomer.

It is found in the cytoplasm. It catalyses the reaction tRNA(Arg) + L-arginine + ATP = L-arginyl-tRNA(Arg) + AMP + diphosphate. The protein is Arginine--tRNA ligase of Streptococcus pyogenes serotype M6 (strain ATCC BAA-946 / MGAS10394).